The sequence spans 29 residues: Lambda-theraphotoxin-Ec2b (29 aa).

Cystine bridges form between Cys-2–Cys-16, Cys-9–Cys-21, and Cys-15–Cys-25.

This sequence belongs to the neurotoxin 30 (phrixotoxin) family. Expressed by the venom gland.

The protein resides in the secreted. Functionally, insect-selective neurotoxin that potently blocks insect calcium-activated potassium (BKCa) channels (Slo-type) in cockroach dorsal unpaired median (DUM) neurons (IC(50)=25.3 nM). This occurs in the absence of any shifts in the voltage dependence of activation. May interact with the turret and/or loop region of the external entrance to the channel and does not project deeply into the pore of the channel. In vivo, does not show toxicity in mice after intracerebroventricular injection of up to 25 pmol/g (1.8 ug/20 g mouse). This Eucratoscelus constrictus (African red-rump baboon spider) protein is Lambda-theraphotoxin-Ec2b.